We begin with the raw amino-acid sequence, 608 residues long: Elongation factor 4 (608 aa).

One can recognise a tr-type G domain in the interval 11 to 193 (DRIRNFSIIA…QIVQKIPAPS (183 aa)). Residues 23 to 28 (DHGKST) and 140 to 143 (NKID) each bind GTP.

This sequence belongs to the TRAFAC class translation factor GTPase superfamily. Classic translation factor GTPase family. LepA subfamily.

The protein resides in the cell membrane. The catalysed reaction is GTP + H2O = GDP + phosphate + H(+). In terms of biological role, required for accurate and efficient protein synthesis under certain stress conditions. May act as a fidelity factor of the translation reaction, by catalyzing a one-codon backward translocation of tRNAs on improperly translocated ribosomes. Back-translocation proceeds from a post-translocation (POST) complex to a pre-translocation (PRE) complex, thus giving elongation factor G a second chance to translocate the tRNAs correctly. Binds to ribosomes in a GTP-dependent manner. The protein is Elongation factor 4 of Anoxybacillus flavithermus (strain DSM 21510 / WK1).